The sequence spans 256 residues: Hemolymph lipopolysaccharide-binding protein (256 aa).

The first 21 residues, 1 to 21 (MMNTRALLPLSVLLMATLCLC), serve as a signal peptide directing secretion. Residues 22–33 (ELPIPILQRFVR) constitute a propeptide that is removed on maturation. A glycan (N-linked (GlcNAc...) asparagine) is linked at N56. Residues 146–256 (IICQQEGGHL…KLPFVCEVEL (111 aa)) enclose the C-type lectin domain. 2 cysteine pairs are disulfide-bonded: C148–C252 and C230–C244.

Hemolymph.

It is found in the secreted. Functionally, participates probably in the elimination of foreign substances invading the insect abdominal cavity, and in trapping intracellular symbionts, when they leak from the mycetomes into the hemolymph. This chain is Hemolymph lipopolysaccharide-binding protein, found in Periplaneta americana (American cockroach).